The chain runs to 332 residues: Ketol-acid reductoisomerase (NADP(+)) 1 (332 aa).

Residues 2–182 enclose the KARI N-terminal Rossmann domain; sequence AELFYDADAD…GGTRAGVIKT (181 aa). NADP(+) is bound by residues 25–28, Ser-51, Ser-53, and 83–86; these read YGSQ and DPIQ. His-108 is an active-site residue. Position 134 (Gly-134) interacts with NADP(+). Positions 183 to 328 constitute a KARI C-terminal knotted domain; the sequence is TFTEETETDL…KELRKLMSWV (146 aa). The Mg(2+) site is built by Asp-191, Glu-195, Glu-227, and Glu-231. Ser-252 provides a ligand contact to substrate.

Belongs to the ketol-acid reductoisomerase family. Mg(2+) serves as cofactor.

The catalysed reaction is (2R)-2,3-dihydroxy-3-methylbutanoate + NADP(+) = (2S)-2-acetolactate + NADPH + H(+). It carries out the reaction (2R,3R)-2,3-dihydroxy-3-methylpentanoate + NADP(+) = (S)-2-ethyl-2-hydroxy-3-oxobutanoate + NADPH + H(+). Its pathway is amino-acid biosynthesis; L-isoleucine biosynthesis; L-isoleucine from 2-oxobutanoate: step 2/4. The protein operates within amino-acid biosynthesis; L-valine biosynthesis; L-valine from pyruvate: step 2/4. Functionally, involved in the biosynthesis of branched-chain amino acids (BCAA). Catalyzes an alkyl-migration followed by a ketol-acid reduction of (S)-2-acetolactate (S2AL) to yield (R)-2,3-dihydroxy-isovalerate. In the isomerase reaction, S2AL is rearranged via a Mg-dependent methyl migration to produce 3-hydroxy-3-methyl-2-ketobutyrate (HMKB). In the reductase reaction, this 2-ketoacid undergoes a metal-dependent reduction by NADPH to yield (R)-2,3-dihydroxy-isovalerate. This Streptomyces coelicolor (strain ATCC BAA-471 / A3(2) / M145) protein is Ketol-acid reductoisomerase (NADP(+)) 1.